The sequence spans 372 residues: C-X-C chemokine receptor type 5 (372 aa).

Over 1 to 55 (MNYPLTLEMDLENLEDLFWELDRLDNYNDTSLVENHLCPATEGPLMASFKAVFVP) the chain is Extracellular. Asn28 carries N-linked (GlcNAc...) asparagine glycosylation. A helical membrane pass occupies residues 56–76 (VAYSLIFLLGVIGNVLVLVIL). Topologically, residues 77–88 (ERHRQTRSSTET) are cytoplasmic. The chain crosses the membrane as a helical span at residues 89–109 (FLFHLAVADLLLVFILPFAVA). Residues 110-124 (EGSVGWVLGTFLCKT) are Extracellular-facing. Cys122 and Cys202 are oxidised to a cystine. A helical membrane pass occupies residues 125–145 (VIALHKVNFYCSSLLLACIAV). At 146–167 (DRYLAIVHAVHAYRHRRLLSIH) the chain is on the cytoplasmic side. Residues 168–188 (ITCGTIWLVGFLLALPEILFA) traverse the membrane as a helical segment. Topologically, residues 189 to 219 (KVSQGHHNNSLPRCTFSQENQAETHAWFTSR) are extracellular. Asn196 is a glycosylation site (N-linked (GlcNAc...) asparagine). Residues 220–240 (FLYHVAGFLLPMLVMGWCYVG) form a helical membrane-spanning segment. Over 241-259 (VVHRLRQAQRRPQRQKAVR) the chain is Cytoplasmic. The chain crosses the membrane as a helical span at residues 260 to 280 (VAILVTSIFFLCWSPYHIVIF). Topologically, residues 281–304 (LDTLARLKAVDNTCKLNGSLPVAI) are extracellular. Residues 305–325 (TMCEFLGLAHCCLNPMLYTFA) form a helical membrane-spanning segment. Topologically, residues 326–372 (GVKFRSDLSRLLTKLGCTGPASLCQLFPSWRRSSLSESENATSLTTF) are cytoplasmic.

It belongs to the G-protein coupled receptor 1 family. Expression in mature B-cells and Burkitt lymphoma cells.

The protein resides in the cell membrane. In terms of biological role, cytokine receptor that binds to B-lymphocyte chemoattractant (BLC). Involved in B-cell migration into B-cell follicles of spleen and Peyer patches but not into those of mesenteric or peripheral lymph nodes. May have a regulatory function in Burkitt lymphoma (BL) lymphomagenesis and/or B-cell differentiation. The chain is C-X-C chemokine receptor type 5 (CXCR5) from Homo sapiens (Human).